Reading from the N-terminus, the 180-residue chain is MLVVKIAVPYAEALLELANANSSLKETTNDINIVSQFLANSSDLKKFLGNPLITRDAKKGVLKDVLGEQIGEKTLTFLMLLVDRGRIAYLDGIAYKFLELSYKEESIEIAKVTSSVQLSAQQQKTIAEKLKKITGAKQIKLALKVDPQLIGGFTIEIGSKLIDTSIRGQLKQISTLLGAV.

The protein belongs to the ATPase delta chain family. In terms of assembly, F-type ATPases have 2 components, F(1) - the catalytic core - and F(0) - the membrane proton channel. F(1) has five subunits: alpha(3), beta(3), gamma(1), delta(1), epsilon(1). CF(0) has four main subunits: a(1), b(1), b'(1) and c(10-14). The alpha and beta chains form an alternating ring which encloses part of the gamma chain. F(1) is attached to F(0) by a central stalk formed by the gamma and epsilon chains, while a peripheral stalk is formed by the delta, b and b' chains.

It localises to the plastid. The protein localises to the chloroplast thylakoid membrane. F(1)F(0) ATP synthase produces ATP from ADP in the presence of a proton or sodium gradient. F-type ATPases consist of two structural domains, F(1) containing the extramembraneous catalytic core and F(0) containing the membrane proton channel, linked together by a central stalk and a peripheral stalk. During catalysis, ATP synthesis in the catalytic domain of F(1) is coupled via a rotary mechanism of the central stalk subunits to proton translocation. Its function is as follows. This protein is part of the stalk that links CF(0) to CF(1). It either transmits conformational changes from CF(0) to CF(1) or is implicated in proton conduction. The polypeptide is ATP synthase subunit delta, chloroplastic (Emiliania huxleyi (Coccolithophore)).